The following is a 62-amino-acid chain: Translational regulator CsrA (62 aa).

The protein belongs to the CsrA/RsmA family. Homodimer; the beta-strands of each monomer intercalate to form a hydrophobic core, while the alpha-helices form wings that extend away from the core.

Its subcellular location is the cytoplasm. Its function is as follows. A key translational regulator that binds mRNA to regulate translation initiation and/or mRNA stability. Mediates global changes in gene expression, shifting from rapid growth to stress survival by linking envelope stress, the stringent response and the catabolite repression systems. Usually binds in the 5'-UTR; binding at or near the Shine-Dalgarno sequence prevents ribosome-binding, repressing translation, binding elsewhere in the 5'-UTR can activate translation and/or stabilize the mRNA. Its function is antagonized by small RNA(s). In Idiomarina loihiensis (strain ATCC BAA-735 / DSM 15497 / L2-TR), this protein is Translational regulator CsrA.